A 508-amino-acid chain; its full sequence is DEAD-box ATP-dependent RNA helicase 8 (508 aa).

The disordered stretch occupies residues 1–123 (MDPRARYPPG…LKLPPQDTRY (123 aa)). Positions 18-53 (NPNYYNRGPPLQQQHNHHQQQQTSAPHHQQYVQRQP) are enriched in low complexity. Basic residues predominate over residues 54–64 (QQHHHHNHHQQ). Positions 134–162 (NEFEDYFLKRELLMGIYEKGFERPSPIQE) match the Q motif motif. Positions 165 to 335 (IPIALTGSDI…DKYLPKPYVI (171 aa)) constitute a Helicase ATP-binding domain. 178 to 185 (AKNGTGKT) is an ATP binding site. The DEAD box motif lies at 283–286 (DEAD). The Helicase C-terminal domain occupies 345–505 (GITQFYAFVE…PIPPQIDQAI (161 aa)).

This sequence belongs to the DEAD box helicase family. DDX6/DHH1 subfamily.

Its subcellular location is the cytoplasm. It localises to the P-body. It carries out the reaction ATP + H2O = ADP + phosphate + H(+). Its function is as follows. ATP-dependent RNA helicase involved in mRNA turnover, and more specifically in mRNA decapping. The sequence is that of DEAD-box ATP-dependent RNA helicase 8 from Oryza sativa subsp. japonica (Rice).